A 547-amino-acid polypeptide reads, in one-letter code: Elongator complex protein 3 (547 aa).

One can recognise a Radical SAM core domain in the interval arginine 82 to proline 372. [4Fe-4S] cluster is bound by residues cysteine 99, cysteine 109, and cysteine 112. Serine 161 carries the post-translational modification Phosphoserine. Position 164 (lysine 164) interacts with acetyl-CoA. Lysine 229 bears the N6-methyllysine mark. Tyrosine 251 carries the post-translational modification Phosphotyrosine. The N-acetyltransferase domain maps to isoleucine 396–lysine 547. Acetyl-CoA is bound by residues glutamate 474 to valine 477, phenylalanine 497 to methionine 499, and tyrosine 530.

This sequence belongs to the ELP3 family. As to quaternary structure, component of the elongator complex which consists of ELP1, ELP2, ELP3, ELP4, ELP5 and ELP6. ELP1, ELP2 and ELP3 form the elongator core complex. Interacts with alpha-tubulin. The cofactor is [4Fe-4S] cluster. In terms of processing, tyrosine-phosphorylated. Also serine/threonine-phosphorylated.

It is found in the cytoplasm. It localises to the nucleus. The catalysed reaction is uridine(34) in tRNA + acetyl-CoA + S-adenosyl-L-methionine + H2O = 5-(carboxymethyl)uridine(34) in tRNA + 5'-deoxyadenosine + L-methionine + CoA + 2 H(+). Its pathway is tRNA modification; 5-methoxycarbonylmethyl-2-thiouridine-tRNA biosynthesis. Functionally, catalytic tRNA acetyltransferase subunit of the elongator complex which is required for multiple tRNA modifications, including mcm5U (5-methoxycarbonylmethyl uridine), mcm5s2U (5-methoxycarbonylmethyl-2-thiouridine), and ncm5U (5-carbamoylmethyl uridine). In the elongator complex, acts as a tRNA uridine(34) acetyltransferase by mediating formation of carboxymethyluridine in the wobble base at position 34 in tRNAs. May also act as a protein lysine acetyltransferase by mediating acetylation of target proteins; such activity is however unclear in vivo and recent evidences suggest that ELP3 primarily acts as a tRNA acetyltransferase. Involved in neurogenesis: regulates the migration and branching of projection neurons in the developing cerebral cortex, through a process depending on alpha-tubulin acetylation. Required for acetylation of GJA1 in the developing cerebral cortex. In Mus musculus (Mouse), this protein is Elongator complex protein 3.